A 278-amino-acid polypeptide reads, in one-letter code: Inositol oxygenase (278 aa).

Substrate-binding positions include Arg-22 and 78-80; that span reads DES. Fe cation is bound by residues His-91, His-116, and Asp-117. Substrate contacts are provided by residues Lys-120 and 134-135; that span reads GD. 3 residues coordinate Fe cation: His-187, His-213, and Asp-246. 213 to 214 contributes to the substrate binding site; that stretch reads HS.

Belongs to the myo-inositol oxygenase family. Fe cation serves as cofactor.

The protein localises to the cytoplasm. It carries out the reaction myo-inositol + O2 = D-glucuronate + H2O + H(+). Its pathway is polyol metabolism; myo-inositol degradation into D-glucuronate; D-glucuronate from myo-inositol: step 1/1. The protein is Inositol oxygenase (miox) of Danio rerio (Zebrafish).